The following is a 537-amino-acid chain: MQETGIRNGAFGADKFGLKNLKQLHWNLGAPQLYQYSLAAGEATLSADGALCADTGEFTGRSPKDKFTVRDASTEKMWWAGNQSITPEQFEALYQDFIKHAEGKTLFAQDLYGGADPTFRIKTRVFTELAWHSLFIRTLLIRPETIELDTFVPELTIIDMPSFRADPMRHGVRSQNVVAIDFARKIVLIGGSYYAGEMKKSVFTTLNYYLPARGVMPMHCSANVGPKGDTAIFFGLSGTGKTTLSADPNRTLIGDDEHGWGPSGVFNFEGGCYAKCIKLSQEAEPQIFAASNRFGAVLENVVLDEDSRVPDFDDGSKTENTRSAYPLDYIPNASRTGRAPHPKNVVMLAADAFGVLPPIAKLSPAQAMYHFLSGYTAKVAGTERGLGSEPQPEFSTCFGSPFLPLDPSVYGNMLRQLIADHNVDCWLVNTGWTGGKYGTGSRMPIKVTRALLTAALDGSLRNVEFRTDKYFGFAVPTALPGVPSEILDPVNTWKDKVEFDKTARALVGMFQKNFAKFEAQVDADVRAAAPDVKLAAE.

Substrate contacts are provided by Arg61, Tyr194, and Lys200. ATP contacts are provided by residues Lys200, His219, and Gly235–Thr243. Mn(2+)-binding residues include Lys200 and His219. Residue Asp256 participates in Mn(2+) binding. ATP contacts are provided by Glu284, Arg322, and Thr448. Arg322 serves as a coordination point for substrate.

This sequence belongs to the phosphoenolpyruvate carboxykinase (ATP) family. Requires Mn(2+) as cofactor.

The protein localises to the cytoplasm. It carries out the reaction oxaloacetate + ATP = phosphoenolpyruvate + ADP + CO2. It functions in the pathway carbohydrate biosynthesis; gluconeogenesis. Functionally, involved in the gluconeogenesis. Catalyzes the conversion of oxaloacetate (OAA) to phosphoenolpyruvate (PEP) through direct phosphoryl transfer between the nucleoside triphosphate and OAA. The sequence is that of Phosphoenolpyruvate carboxykinase (ATP) from Bradyrhizobium sp. (strain ORS 278).